The chain runs to 61 residues: MFQISNLLIAADFSAEVANNSAVGMIGSFIAAALLIVVPATAFLIFVSQKDSLDRTSTGRR.

The chain crosses the membrane as a helical span at residues 26–46; that stretch reads IGSFIAAALLIVVPATAFLIF.

It belongs to the PsbX family. Type 2 subfamily. As to quaternary structure, PSII consists of a core antenna complex that captures photons, and an electron transfer chain that converts photonic excitation into a charge separation. PSII forms dimeric complexes.

It localises to the cellular thylakoid membrane. Functionally, involved in the binding and/or turnover of quinones at the Q(B) site of Photosystem II. This chain is Photosystem II reaction center X protein, found in Prochlorococcus marinus (strain AS9601).